The following is a 303-amino-acid chain: Probable 5-dehydro-4-deoxyglucarate dehydratase (303 aa).

This sequence belongs to the DapA family.

The enzyme catalyses 5-dehydro-4-deoxy-D-glucarate + H(+) = 2,5-dioxopentanoate + CO2 + H2O. It participates in carbohydrate acid metabolism; D-glucarate degradation; 2,5-dioxopentanoate from D-glucarate: step 2/2. The sequence is that of Probable 5-dehydro-4-deoxyglucarate dehydratase from Pseudomonas fluorescens (strain Pf0-1).